We begin with the raw amino-acid sequence, 523 residues long: Putative UDP-glucuronosyltransferase ugt-50 (523 aa).

A signal peptide spans methionine 1–alanine 25. 4 N-linked (GlcNAc...) asparagine glycosylation sites follow: asparagine 84, asparagine 248, asparagine 283, and asparagine 487. Residues isoleucine 490–leucine 508 traverse the membrane as a helical segment.

This sequence belongs to the UDP-glycosyltransferase family.

It is found in the membrane. The catalysed reaction is glucuronate acceptor + UDP-alpha-D-glucuronate = acceptor beta-D-glucuronoside + UDP + H(+). The chain is Putative UDP-glucuronosyltransferase ugt-50 (ugt-50) from Caenorhabditis elegans.